The following is a 191-amino-acid chain: Small ribosomal subunit protein uS10c (191 aa).

A chloroplast-targeting transit peptide spans 1-56; the sequence is MAVSTVSSFLLPSFGIPSSSPSSTRLKVSLLPSSSTHGGLSSCVLTKPSVSLTKVF.

It belongs to the universal ribosomal protein uS10 family. In terms of assembly, part of the 30S ribosomal subunit.

The protein localises to the plastid. The protein resides in the chloroplast. This chain is Small ribosomal subunit protein uS10c (RPS10), found in Arabidopsis thaliana (Mouse-ear cress).